The primary structure comprises 214 residues: Outer-membrane lipoprotein carrier protein (214 aa).

The N-terminal stretch at 1–23 is a signal peptide; it reads MNKRITVLSLLLATSLSSAAAMA.

The protein belongs to the LolA family. As to quaternary structure, monomer.

It localises to the periplasm. Functionally, participates in the translocation of lipoproteins from the inner membrane to the outer membrane. Only forms a complex with a lipoprotein if the residue after the N-terminal Cys is not an aspartate (The Asp acts as a targeting signal to indicate that the lipoprotein should stay in the inner membrane). This Shewanella frigidimarina (strain NCIMB 400) protein is Outer-membrane lipoprotein carrier protein.